We begin with the raw amino-acid sequence, 520 residues long: Hydroxymethylglutaryl-CoA synthase, cytoplasmic (520 aa).

Ser4 carries the phosphoserine modification. Asp43 and Ala44 together coordinate (3S)-3-hydroxy-3-methylglutaryl-CoA. 44-46 (AGK) is a CoA binding site. Lys46 bears the N6-acetyllysine mark. Glu95 functions as the Proton donor/acceptor in the catalytic mechanism. Positions 129, 167, 171, 221, and 264 each coordinate (3S)-3-hydroxy-3-methylglutaryl-CoA. The active-site Acyl-thioester intermediate is Cys129. Position 167 (Asn167) interacts with CoA. Ser221 is a binding site for CoA. His264 functions as the Proton donor/acceptor in the catalytic mechanism. Residues Lys269 and Lys273 each coordinate CoA. Positions 273, 343, and 377 each coordinate (3S)-3-hydroxy-3-methylglutaryl-CoA. N6-acetyllysine is present on Lys273. Residue Thr476 is modified to Phosphothreonine. Positions 492-520 (HIPSPAKKVPRLPATAAEPEAAVISNGEH) are disordered. Phosphoserine occurs at positions 495 and 516.

This sequence belongs to the thiolase-like superfamily. HMG-CoA synthase family. In terms of assembly, homodimer.

The protein resides in the cytoplasm. It carries out the reaction acetoacetyl-CoA + acetyl-CoA + H2O = (3S)-3-hydroxy-3-methylglutaryl-CoA + CoA + H(+). Its pathway is metabolic intermediate biosynthesis; (R)-mevalonate biosynthesis; (R)-mevalonate from acetyl-CoA: step 2/3. Catalyzes the condensation of acetyl-CoA with acetoacetyl-CoA to form HMG-CoA, which is converted by HMG-CoA reductase (HMGCR) into mevalonate, a precursor for cholesterol synthesis. The sequence is that of Hydroxymethylglutaryl-CoA synthase, cytoplasmic from Homo sapiens (Human).